A 492-amino-acid chain; its full sequence is Aspartate aminotransferase (492 aa).

The N-terminal 66 residues, Met1–Arg66, are a transit peptide targeting the chloroplast. L-aspartate contacts are provided by Gly119, Trp206, and Asn256. Lys319 carries the N6-(pyridoxal phosphate)lysine modification. Residue Arg458 participates in L-aspartate binding.

The protein belongs to the class-I pyridoxal-phosphate-dependent aminotransferase family. As to quaternary structure, homodimer. Requires pyridoxal 5'-phosphate as cofactor.

It localises to the plastid. Its subcellular location is the chloroplast. The enzyme catalyses L-aspartate + 2-oxoglutarate = oxaloacetate + L-glutamate. Its function is as follows. Prokaryotic-type aspartate aminotransferase. Specific for aspartate and no activity with glutamine, asparagine, alanine, histidine, leucine, methionine, lysine, arginine, tryptophan, tyrosine, phenylalanine or kynurenine. The polypeptide is Aspartate aminotransferase (AAT) (Pinus pinaster (Maritime pine)).